Consider the following 426-residue polypeptide: Glutamate-1-semialdehyde 2,1-aminomutase (426 aa).

An N6-(pyridoxal phosphate)lysine modification is found at Lys265.

This sequence belongs to the class-III pyridoxal-phosphate-dependent aminotransferase family. HemL subfamily. In terms of assembly, homodimer. Pyridoxal 5'-phosphate is required as a cofactor.

The protein localises to the cytoplasm. The catalysed reaction is (S)-4-amino-5-oxopentanoate = 5-aminolevulinate. Its pathway is porphyrin-containing compound metabolism; protoporphyrin-IX biosynthesis; 5-aminolevulinate from L-glutamyl-tRNA(Glu): step 2/2. The chain is Glutamate-1-semialdehyde 2,1-aminomutase from Salmonella agona (strain SL483).